The primary structure comprises 234 residues: Putative N-acetylmannosamine-6-phosphate 2-epimerase (234 aa).

This sequence belongs to the NanE family.

It catalyses the reaction an N-acyl-D-glucosamine 6-phosphate = an N-acyl-D-mannosamine 6-phosphate. Its pathway is amino-sugar metabolism; N-acetylneuraminate degradation; D-fructose 6-phosphate from N-acetylneuraminate: step 3/5. Converts N-acetylmannosamine-6-phosphate (ManNAc-6-P) to N-acetylglucosamine-6-phosphate (GlcNAc-6-P). The protein is Putative N-acetylmannosamine-6-phosphate 2-epimerase of Klebsiella pneumoniae (strain 342).